A 522-amino-acid chain; its full sequence is Alanine aminotransferase 2 (522 aa).

Position 340 is an N6-(pyridoxal phosphate)lysine (Lys-340). N6-acetyllysine is present on residues Lys-414, Lys-504, and Lys-511.

This sequence belongs to the class-I pyridoxal-phosphate-dependent aminotransferase family. Alanine aminotransferase subfamily. In terms of assembly, homodimer. Pyridoxal 5'-phosphate is required as a cofactor. Specifically induced in fatty liver. Highly expressed in muscle, liver and white adipose tissue. Moderately expressed in brain and kidney and expressed at low levels in the heart.

It catalyses the reaction L-alanine + 2-oxoglutarate = pyruvate + L-glutamate. Its pathway is amino-acid degradation; L-alanine degradation via transaminase pathway; pyruvate from L-alanine: step 1/1. Its function is as follows. Catalyzes the reversible transamination between alanine and 2-oxoglutarate to form pyruvate and glutamate. The chain is Alanine aminotransferase 2 (Gpt2) from Mus musculus (Mouse).